The primary structure comprises 227 residues: WTAAANYVKIKVGTGKFARKTVVLSQKRTGTLKCATMEEIEAEKSLIEKSVKERMEKTIENVKASFNSIRTXRSNPDMLDKIKVEYYGTPTSLKSIAQISTPDSSSLLVNPYDKSSLKDIEKAIVNSDLGITPNNDGDVIRLSIPQLTADRRKELSKIVAKQAEEGKVALRNIRRDAIKSYDKLEKEKKLSEDNVKDLSSDLQKVIDEYIKKVDSIFKQKEKELMTV.

The transit peptide at 1-34 directs the protein to the chloroplast; the sequence is WTAAANYVKIKVGTGKFARKTVVLSQKRTGTLKC. Positions 167-212 form a coiled coil; the sequence is KVALRNIRRDAIKSYDKLEKEKKLSEDNVKDLSSDLQKVIDEYIKK.

This sequence belongs to the RRF family.

It is found in the plastid. Its subcellular location is the chloroplast. In terms of biological role, responsible for the release of ribosomes from messenger RNA at the termination of chloroplastic protein biosynthesis. The protein is Ribosome-recycling factor, chloroplastic (RRF) of Daucus carota (Wild carrot).